Here is a 373-residue protein sequence, read N- to C-terminus: Peptide chain release factor 2 (373 aa).

Glutamine 252 is modified (N5-methylglutamine).

The protein belongs to the prokaryotic/mitochondrial release factor family. In terms of processing, methylated by PrmC. Methylation increases the termination efficiency of RF2.

The protein resides in the cytoplasm. In terms of biological role, peptide chain release factor 2 directs the termination of translation in response to the peptide chain termination codons UGA and UAA. This is Peptide chain release factor 2 from Staphylococcus saprophyticus subsp. saprophyticus (strain ATCC 15305 / DSM 20229 / NCIMB 8711 / NCTC 7292 / S-41).